The following is a 546-amino-acid chain: Phosphatidylinositol 4-phosphate 5-kinase type-1 alpha (546 aa).

A PIPK domain is found at 65–433; it reads TSSALKGAIQ…RFQRFMCNTV (369 aa). Lys87 participates in a covalent cross-link: Glycyl lysine isopeptide (Lys-Gly) (interchain with G-Cter in ubiquitin). The interval 441 to 522 is disordered; that stretch reads PSPTKKFRSG…PGPSFSPAVG (82 aa). Over residues 449–461 the composition is skewed to low complexity; sequence SGPSFSRRSGPSG. Over residues 462 to 471 the composition is skewed to polar residues; sequence NSCTPSQPTA. Residues 473–493 are compositionally biased toward basic and acidic residues; it reads GEHKAQVTTKAEVEPDIHLGR.

As to quaternary structure, interacts with RAC1. Interacts with TUT1. Forms a complex with CDH1/E-cadherin, CTNNB1/beta-catenin and CTNND1 at the plasma membrane upon calcium stimulation. Found in a ternary complex with IRS1 and DGKZ in the absence of insulin stimulation. Interacts with DGKZ. Interacts with PIP4K2C; the interaction inhibits PIP5K1A kinase activity.

It localises to the cell membrane. It is found in the cytoplasm. The protein localises to the nucleus. The protein resides in the nucleus speckle. Its subcellular location is the cell projection. It localises to the ruffle. It is found in the lamellipodium. It carries out the reaction a 1,2-diacyl-sn-glycero-3-phospho-(1D-myo-inositol 4-phosphate) + ATP = a 1,2-diacyl-sn-glycero-3-phospho-(1D-myo-inositol-4,5-bisphosphate) + ADP + H(+). It catalyses the reaction 1-octadecanoyl-2-(5Z,8Z,11Z,14Z)-eicosatetraenoyl-sn-glycero-3-phospho-1D-myo-inositol 4-phosphate + ATP = 1-octadecanoyl-2-(5Z,8Z,11Z,14Z)-eicosatetraenoyl-sn-glycero-3-phospho-1D-myo-inositol 4,5-bisphosphate + ADP + H(+). The catalysed reaction is 1,2-dihexadecanoyl-sn-glycero-3-phospho-(1D-myo-inositol-4-phosphate) + ATP = 1,2-dihexadecanoyl-sn-glycero-3-phospho-(1D-myo-inositol-4,5-bisphosphate) + ADP + H(+). The enzyme catalyses 1-octadecanoyl-2-(9Z)-octadecenoyl-sn-glycero-3-phospho-1D-myo-inositol 4-phosphate + ATP = 1-octadecanoyl-2-(9Z)-octadecenoyl-sn-glycero-3-phospho-1D-myo-inositol 4,5-bisphosphate + ADP + H(+). It carries out the reaction 1-octadecanoyl-2-(9Z)-octadecenoyl-sn-glycero-3-phospho-1D-myo-inositol + ATP = 1-octadecanoyl-2-(9Z)-octadecenoyl-sn-glycero-3-phospho-1D-myo-inositol 5-phosphate + ADP + H(+). It catalyses the reaction 1-octadecanoyl-2-(9Z,12Z)-octadecadienoyl-sn-glycero-3-phospho-1D-myo-inositol + ATP = 1-octadecanoyl-2-(9Z,12Z)-octadecadienoyl-sn-glycero-3-phospho-1D-myo-inositol 5-phosphate + ADP + H(+). The catalysed reaction is 1-octadecanoyl-2-(5Z,8Z,11Z,14Z-eicosatetraenoyl)-sn-glycero-3-phospho-(1D-myo-inositol) + ATP = 1-octadecanoyl-2-(5Z,8Z,11Z,14Z)-eicosatetraenoyl-sn-glycero-3-phospho-1D-myo-inositol 5-phosphate + ADP + H(+). The enzyme catalyses 1,2-di-(9Z,12Z)-octadecadienoyl-sn-glycero-3-phospho-1D-myo-inositol + ATP = 1,2-di(9Z,12Z)-octadecadienoyl-sn-glycero-3-phospho-1D-myo-inositol 5-phosphate + ADP + H(+). Functionally, catalyzes the phosphorylation of phosphatidylinositol 4-phosphate (PtdIns(4)P/PI4P) to form phosphatidylinositol 4,5-bisphosphate (PtdIns(4,5)P2/PIP2), a lipid second messenger that regulates several cellular processes such as signal transduction, vesicle trafficking, actin cytoskeleton dynamics, cell adhesion, and cell motility. PtdIns(4,5)P2 can directly act as a second messenger or can be utilized as a precursor to generate other second messengers: inositol 1,4,5-trisphosphate (IP3), diacylglycerol (DAG) or phosphatidylinositol-3,4,5-trisphosphate (PtdIns(3,4,5)P3/PIP3). PIP5K1A-mediated phosphorylation of PtdIns(4)P is the predominant pathway for PtdIns(4,5)P2 synthesis. Can also use phosphatidylinositol (PtdIns) as substrate in vitro. Together with PIP5K1C, is required for phagocytosis, both enzymes regulating different types of actin remodeling at sequential steps. Promotes particle ingestion by activating the WAS GTPase-binding protein that induces Arp2/3 dependent actin polymerization at the nascent phagocytic cup. Together with PIP5K1B, is required, after stimulation by G-protein coupled receptors, for the synthesis of IP3 that will induce stable platelet adhesion. Recruited to the plasma membrane by the E-cadherin/beta-catenin complex where it provides the substrate PtdIns(4,5)P2 for the production of PtdIns(3,4,5)P3, IP3 and DAG, that will mobilize internal calcium and drive keratinocyte differentiation. Positively regulates insulin-induced translocation of SLC2A4 to the cell membrane in adipocytes. Together with PIP5K1C has a role during embryogenesis. Independently of its catalytic activity, is required for membrane ruffling formation, actin organization and focal adhesion formation during directional cell migration by controlling integrin-induced translocation of the small GTPase RAC1 to the plasma membrane. Also functions in the nucleus where it acts as an activator of TUT1 adenylyltransferase activity in nuclear speckles, thereby regulating mRNA polyadenylation of a select set of mRNAs. This Rattus norvegicus (Rat) protein is Phosphatidylinositol 4-phosphate 5-kinase type-1 alpha.